The primary structure comprises 445 residues: Phosphoglucosamine mutase (445 aa).

The active-site Phosphoserine intermediate is the Ser102. Residues Ser102, Asp241, Asp243, and Asp245 each contribute to the Mg(2+) site. The residue at position 102 (Ser102) is a Phosphoserine.

The protein belongs to the phosphohexose mutase family. Requires Mg(2+) as cofactor. In terms of processing, activated by phosphorylation.

It catalyses the reaction alpha-D-glucosamine 1-phosphate = D-glucosamine 6-phosphate. Functionally, catalyzes the conversion of glucosamine-6-phosphate to glucosamine-1-phosphate. The sequence is that of Phosphoglucosamine mutase from Aliivibrio fischeri (strain ATCC 700601 / ES114) (Vibrio fischeri).